The following is a 79-amino-acid chain: Cytochrome b-c1 complex subunit 10 (79 aa).

The Mitochondrial matrix portion of the chain corresponds to 1–23; it reads MISFFPNKPMYHVQPHISFITPE. The helical transmembrane segment at 24–47 threads the bilayer; sequence RTMKTIPAFSRWAFAAVAGVFVFA. The Mitochondrial intermembrane segment spans residues 48-79; the sequence is MQVPKVKTTILQPIAFIGDHFKDKTPEEDKWL.

Belongs to the UQCR11/QCR10 family. Component of the ubiquinol-cytochrome c oxidoreductase (cytochrome b-c1 complex, complex III, CIII), a multisubunit enzyme composed of 3 respiratory subunits cytochrome b, cytochrome c1 and Rieske protein, 2 core protein subunits, and additional low-molecular weight protein subunits. The complex exists as an obligatory dimer and forms supercomplexes (SCs) in the inner mitochondrial membrane with cytochrome c oxidase (complex IV, CIV).

It localises to the mitochondrion inner membrane. Functionally, component of the ubiquinol-cytochrome c oxidoreductase, a multisubunit transmembrane complex that is part of the mitochondrial electron transport chain which drives oxidative phosphorylation. The respiratory chain contains 3 multisubunit complexes succinate dehydrogenase (complex II, CII), ubiquinol-cytochrome c oxidoreductase (cytochrome b-c1 complex, complex III, CIII) and cytochrome c oxidase (complex IV, CIV), that cooperate to transfer electrons derived from NADH and succinate to molecular oxygen, creating an electrochemical gradient over the inner membrane that drives transmembrane transport and the ATP synthase. The cytochrome b-c1 complex catalyzes electron transfer from ubiquinol to cytochrome c, linking this redox reaction to translocation of protons across the mitochondrial inner membrane, with protons being carried across the membrane as hydrogens on the quinol. In the process called Q cycle, 2 protons are consumed from the matrix, 4 protons are released into the intermembrane space and 2 electrons are passed to cytochrome c. QCR10 has a role in CIII assembly and RIP1 stability. This chain is Cytochrome b-c1 complex subunit 10, found in Schizosaccharomyces pombe (strain 972 / ATCC 24843) (Fission yeast).